A 516-amino-acid chain; its full sequence is Membrane-bound transcription factor site-2 protease (516 aa).

Residues 1 to 3 are Cytoplasmic-facing; it reads MIP. Residues 4-24 traverse the membrane as a helical segment; the sequence is VSLVVVVVGGWTAVYLTDLVL. At 25–74 the chain is on the lumenal side; the sequence is KSSVYFKHSYEDWLENNGLSISPFHIRWQTAVFNRAFYSWGRRKARMLYQ. 2 helical membrane passes run 75 to 95 and 96 to 107; these read WFNF…FLLG and KTLIQTLGQMMA. Residues 108 to 141 lie on the Lumenal side of the membrane; that stretch reads DSSYSSSSSSSSHSSSSSSSSSSSSSLYNEQVLQ. The helical transmembrane segment at 142-166 threads the bilayer; sequence VVVPGINLPVNQLTYFFAAVLISGV. Position 168 (H168) interacts with Zn(2+). E169 is a catalytic residue. The next 3 membrane-spanning stretches (helical) occupy residues 171–183, 184–206, and 226–248; these read GHGI…QVRF, NGFG…TTHL, and FILA…PFYY. Residue H172 participates in Zn(2+) binding. Over 249–443 the chain is Lumenal; it reads TGVGVLITEV…LPVVVETFVK (195 aa). Residue N334 is glycosylated (N-linked (GlcNAc...) asparagine). 2 helical membrane-spanning segments follow: residues 444-461 and 462-473; these read YLIS…VPCF and ALDGQWILNSFL. Residues 474-489 are Lumenal-facing; that stretch reads DATLTSVIGDNDVKDL. A helical transmembrane segment spans residues 490–510; sequence IGFFILLGGSILLAANVALGL. Residues 511 to 516 are Cytoplasmic-facing; it reads WMVTAR.

This sequence belongs to the peptidase M50A family. Zn(2+) serves as cofactor.

It localises to the membrane. The protein resides in the cytoplasm. It is found in the golgi apparatus membrane. The enzyme catalyses Cleaves several transcription factors that are type-2 transmembrane proteins within membrane-spanning domains. Known substrates include sterol regulatory element-binding protein (SREBP) -1, SREBP-2 and forms of the transcriptional activator ATF6. SREBP-2 is cleaved at the site 477-DRSRILL-|-CVLTFLCLSFNPLTSLLQWGGA-505. The residues Asn-Pro, 11 residues distal to the site of cleavage in the membrane-spanning domain, are important for cleavage by S2P endopeptidase. Replacement of either of these residues does not prevent cleavage, but there is no cleavage if both of these residues are replaced.. Functionally, zinc metalloprotease that mediates intramembrane proteolysis of proteins such as ATF6, ATF6B, SREBF1/SREBP1 and SREBF2/SREBP2. Catalyzes the second step in the proteolytic activation of the sterol regulatory element-binding proteins (SREBPs) SREBF1/SREBP1 and SREBF2/SREBP2: cleaves SREBPs within the first transmembrane segment, thereby releasing the N-terminal segment with a portion of the transmembrane segment attached. Mature N-terminal SREBP fragments shuttle to the nucleus and activate gene transcription. Also mediates the second step in the proteolytic activation of the cyclic AMP-dependent transcription factor ATF-6 (ATF6 and ATF6B). Involved in intramembrane proteolysis during bone formation. In astrocytes and osteoblasts, upon DNA damage and ER stress, mediates the second step of the regulated intramembrane proteolytic activation of the transcription factor CREB3L1, leading to the inhibition of cell-cycle progression. This chain is Membrane-bound transcription factor site-2 protease, found in Bos taurus (Bovine).